The primary structure comprises 168 residues: ATP synthase subunit b (168 aa).

A helical membrane pass occupies residues 9–29 (SIPFGTIAYTLFIFLLLLVML).

The protein belongs to the ATPase B chain family. F-type ATPases have 2 components, F(1) - the catalytic core - and F(0) - the membrane proton channel. F(1) has five subunits: alpha(3), beta(3), gamma(1), delta(1), epsilon(1). F(0) has three main subunits: a(1), b(2) and c(10-14). The alpha and beta chains form an alternating ring which encloses part of the gamma chain. F(1) is attached to F(0) by a central stalk formed by the gamma and epsilon chains, while a peripheral stalk is formed by the delta and b chains.

It is found in the cell membrane. F(1)F(0) ATP synthase produces ATP from ADP in the presence of a proton or sodium gradient. F-type ATPases consist of two structural domains, F(1) containing the extramembraneous catalytic core and F(0) containing the membrane proton channel, linked together by a central stalk and a peripheral stalk. During catalysis, ATP synthesis in the catalytic domain of F(1) is coupled via a rotary mechanism of the central stalk subunits to proton translocation. In terms of biological role, component of the F(0) channel, it forms part of the peripheral stalk, linking F(1) to F(0). The polypeptide is ATP synthase subunit b (Bacillus cereus (strain B4264)).